The sequence spans 367 residues: Indole glucosinolate O-methyltransferase 5 (367 aa).

The S-adenosyl-L-homocysteine site is built by glycine 209, aspartate 232, aspartate 252, methionine 253, and lysine 266. Residue histidine 270 is the Proton acceptor of the active site.

It belongs to the class I-like SAM-binding methyltransferase superfamily. Cation-independent O-methyltransferase family.

It participates in secondary metabolite biosynthesis. Its function is as follows. Involved in indole glucosinolate biosynthesis. Catalyzes methoxylation reactions of the glucosinolate indole ring. Converts the hydroxy intermediates 4-hydroxy-indol-3-yl-methylglucosinolate (4OH-I3M) and 1-hydroxy-indol-3-yl-methylglucosinolate (1OH-I3M) to 4-methoxy-indol-3-yl-methylglucosinolate (4MO-I3M) and 1-methoxy-indol-3-yl-methylglucosinolate, respectively. This Arabidopsis thaliana (Mouse-ear cress) protein is Indole glucosinolate O-methyltransferase 5.